Here is a 245-residue protein sequence, read N- to C-terminus: 1-(5-phosphoribosyl)-5-[(5-phosphoribosylamino)methylideneamino] imidazole-4-carboxamide isomerase (245 aa).

Aspartate 10 functions as the Proton acceptor in the catalytic mechanism. The active-site Proton donor is aspartate 135.

The protein belongs to the HisA/HisF family.

Its subcellular location is the cytoplasm. It carries out the reaction 1-(5-phospho-beta-D-ribosyl)-5-[(5-phospho-beta-D-ribosylamino)methylideneamino]imidazole-4-carboxamide = 5-[(5-phospho-1-deoxy-D-ribulos-1-ylimino)methylamino]-1-(5-phospho-beta-D-ribosyl)imidazole-4-carboxamide. It participates in amino-acid biosynthesis; L-histidine biosynthesis; L-histidine from 5-phospho-alpha-D-ribose 1-diphosphate: step 4/9. The polypeptide is 1-(5-phosphoribosyl)-5-[(5-phosphoribosylamino)methylideneamino] imidazole-4-carboxamide isomerase (Methanosarcina acetivorans (strain ATCC 35395 / DSM 2834 / JCM 12185 / C2A)).